Reading from the N-terminus, the 104-residue chain is Small ribosomal subunit protein uS10 (104 aa).

The protein belongs to the universal ribosomal protein uS10 family. As to quaternary structure, part of the 30S ribosomal subunit.

Its function is as follows. Involved in the binding of tRNA to the ribosomes. The polypeptide is Small ribosomal subunit protein uS10 (Xanthomonas oryzae pv. oryzae (strain MAFF 311018)).